The sequence spans 96 residues: (4S)-4-hydroxy-5-phosphonooxypentane-2,3-dione isomerase (96 aa).

An ABM domain is found at 2 to 91 (HVTLVEINVH…MTGPRKKRLF (90 aa)).

Belongs to the LsrG family. As to quaternary structure, homodimer.

It is found in the cytoplasm. It carries out the reaction (2S)-2-hydroxy-3,4-dioxopentyl phosphate = 3-hydroxy-2,4-dioxopentyl phosphate. In terms of biological role, involved in the degradation of phospho-AI-2, thereby terminating induction of the lsr operon and closing the AI-2 signaling cycle. Catalyzes the conversion of (4S)-4-hydroxy-5-phosphonooxypentane-2,3-dione (P-DPD) to 3-hydroxy-5-phosphonooxypentane-2,4-dione (P-HPD). The polypeptide is (4S)-4-hydroxy-5-phosphonooxypentane-2,3-dione isomerase (Escherichia coli O9:H4 (strain HS)).